The primary structure comprises 424 residues: Adenylyltransferase and sulfurtransferase UBA4 (424 aa).

Residues Gly76, Asp97, 104-108, Lys121, and 165-166 contribute to the ATP site; these read TNLHR and DS. Zn(2+) contacts are provided by Cys206 and Cys209. The active-site Glycyl thioester intermediate; for adenylyltransferase activity is Cys223. Cys283 provides a ligand contact to Zn(2+). Residues 326–422 enclose the Rhodanese domain; it reads RNSDHVLLDV…WYSEVDQNIP (97 aa). The Cysteine persulfide intermediate; for sulfurtransferase activity role is filled by Cys382.

In the N-terminal section; belongs to the HesA/MoeB/ThiF family. UBA4 subfamily. Requires Zn(2+) as cofactor.

Its subcellular location is the cytoplasm. The protein resides in the cytosol. It participates in tRNA modification; 5-methoxycarbonylmethyl-2-thiouridine-tRNA biosynthesis. In terms of biological role, plays a central role in 2-thiolation of mcm(5)S(2)U at tRNA wobble positions of cytosolic tRNA(Lys), tRNA(Glu) and tRNA(Gln). Acts by mediating the C-terminal thiocarboxylation of sulfur carrier URM1. Its N-terminus first activates URM1 as acyl-adenylate (-COAMP), then the persulfide sulfur on the catalytic cysteine is transferred to URM1 to form thiocarboxylation (-COSH) of its C-terminus. The reaction probably involves hydrogen sulfide that is generated from the persulfide intermediate and that acts as a nucleophile towards URM1. Subsequently, a transient disulfide bond is formed. Does not use thiosulfate as sulfur donor; NFS1 probably acting as a sulfur donor for thiocarboxylation reactions. Prior mcm(5) tRNA modification by the elongator complex is required for 2-thiolation. May also be involved in protein urmylation. This Meyerozyma guilliermondii (strain ATCC 6260 / CBS 566 / DSM 6381 / JCM 1539 / NBRC 10279 / NRRL Y-324) (Yeast) protein is Adenylyltransferase and sulfurtransferase UBA4.